A 557-amino-acid polypeptide reads, in one-letter code: Dihydroxy-acid dehydratase (557 aa).

Cysteine 50 is a binding site for [2Fe-2S] cluster. Aspartate 82 serves as a coordination point for Mg(2+). Cysteine 123 serves as a coordination point for [2Fe-2S] cluster. 2 residues coordinate Mg(2+): aspartate 124 and lysine 125. Position 125 is an N6-carboxylysine (lysine 125). Residue cysteine 195 coordinates [2Fe-2S] cluster. Position 447 (glutamate 447) interacts with Mg(2+). The active-site Proton acceptor is the serine 473.

It belongs to the IlvD/Edd family. Homodimer. [2Fe-2S] cluster serves as cofactor. The cofactor is Mg(2+).

The catalysed reaction is (2R)-2,3-dihydroxy-3-methylbutanoate = 3-methyl-2-oxobutanoate + H2O. It carries out the reaction (2R,3R)-2,3-dihydroxy-3-methylpentanoate = (S)-3-methyl-2-oxopentanoate + H2O. The protein operates within amino-acid biosynthesis; L-isoleucine biosynthesis; L-isoleucine from 2-oxobutanoate: step 3/4. It functions in the pathway amino-acid biosynthesis; L-valine biosynthesis; L-valine from pyruvate: step 3/4. Functionally, functions in the biosynthesis of branched-chain amino acids. Catalyzes the dehydration of (2R,3R)-2,3-dihydroxy-3-methylpentanoate (2,3-dihydroxy-3-methylvalerate) into 2-oxo-3-methylpentanoate (2-oxo-3-methylvalerate) and of (2R)-2,3-dihydroxy-3-methylbutanoate (2,3-dihydroxyisovalerate) into 2-oxo-3-methylbutanoate (2-oxoisovalerate), the penultimate precursor to L-isoleucine and L-valine, respectively. This is Dihydroxy-acid dehydratase from Burkholderia pseudomallei (strain 1710b).